The following is a 732-amino-acid chain: Translation initiation factor IF-2 (732 aa).

The interval 40–147 is disordered; the sequence is PEVVEKLDHT…QQEQPMKKEK (108 aa). Residues 42–67 are compositionally biased toward basic and acidic residues; it reads VVEKLDHTYNKKNERPQASAPKEKQK. A compositionally biased stretch (basic residues) spans 90 to 103; it reads KVPKKKSANKKKEG. A compositionally biased stretch (basic and acidic residues) spans 104 to 117; the sequence is KKHDLQLQQQEKKI. Residues 118-129 show a composition bias toward basic residues; the sequence is FHQQKKKIKGKA. Residues 233-402 enclose the tr-type G domain; the sequence is ERPPVVTIMG…LLVSEMEELK (170 aa). The G1 stretch occupies residues 242 to 249; that stretch reads GHVDHGKT. 242-249 lines the GTP pocket; it reads GHVDHGKT. The segment at 267–271 is G2; that stretch reads GITQH. Positions 288-291 are G3; it reads DTPG. GTP contacts are provided by residues 288 to 292 and 342 to 345; these read DTPGH and NKMD. The segment at 342–345 is G4; it reads NKMD. Positions 378–380 are G5; the sequence is SAK.

The protein belongs to the TRAFAC class translation factor GTPase superfamily. Classic translation factor GTPase family. IF-2 subfamily.

The protein localises to the cytoplasm. In terms of biological role, one of the essential components for the initiation of protein synthesis. Protects formylmethionyl-tRNA from spontaneous hydrolysis and promotes its binding to the 30S ribosomal subunits. Also involved in the hydrolysis of GTP during the formation of the 70S ribosomal complex. In Geobacillus sp. (strain WCH70), this protein is Translation initiation factor IF-2.